The primary structure comprises 486 residues: Cardiolipin synthase A (486 aa).

Helical transmembrane passes span 3–23 (TVYT…IAGV) and 38–58 (MAWL…YLAV). PLD phosphodiesterase domains are found at residues 219–246 (MDLR…VDPR) and 399–426 (EGGL…DMRS). Active-site residues include histidine 224, lysine 226, aspartate 231, histidine 404, lysine 406, and aspartate 411.

Belongs to the phospholipase D family. Cardiolipin synthase subfamily. ClsA sub-subfamily.

It localises to the cell inner membrane. It carries out the reaction 2 a 1,2-diacyl-sn-glycero-3-phospho-(1'-sn-glycerol) = a cardiolipin + glycerol. In terms of biological role, catalyzes the reversible phosphatidyl group transfer from one phosphatidylglycerol molecule to another to form cardiolipin (CL) (diphosphatidylglycerol) and glycerol. This Shigella flexneri protein is Cardiolipin synthase A.